The sequence spans 324 residues: tRNA U34 carboxymethyltransferase (324 aa).

Carboxy-S-adenosyl-L-methionine-binding positions include lysine 91, tryptophan 105, lysine 110, glycine 130, 152–154 (DPS), 181–182 (IE), methionine 196, tyrosine 200, and arginine 315.

The protein belongs to the class I-like SAM-binding methyltransferase superfamily. CmoB family. Homotetramer.

It carries out the reaction carboxy-S-adenosyl-L-methionine + 5-hydroxyuridine(34) in tRNA = 5-carboxymethoxyuridine(34) in tRNA + S-adenosyl-L-homocysteine + H(+). Functionally, catalyzes carboxymethyl transfer from carboxy-S-adenosyl-L-methionine (Cx-SAM) to 5-hydroxyuridine (ho5U) to form 5-carboxymethoxyuridine (cmo5U) at position 34 in tRNAs. The protein is tRNA U34 carboxymethyltransferase of Photobacterium profundum (strain SS9).